Reading from the N-terminus, the 78-residue chain is Acyl carrier protein (78 aa).

The 76-residue stretch at 2 to 77 (SDVLERVSKI…DAVKFISEKV (76 aa)) folds into the Carrier domain. Ser37 is modified (O-(pantetheine 4'-phosphoryl)serine).

The protein belongs to the acyl carrier protein (ACP) family. In terms of processing, 4'-phosphopantetheine is transferred from CoA to a specific serine of apo-ACP by AcpS. This modification is essential for activity because fatty acids are bound in thioester linkage to the sulfhydryl of the prosthetic group.

Its subcellular location is the cytoplasm. The protein operates within lipid metabolism; fatty acid biosynthesis. In terms of biological role, carrier of the growing fatty acid chain in fatty acid biosynthesis. This Maricaulis maris (strain MCS10) (Caulobacter maris) protein is Acyl carrier protein.